The following is a 404-amino-acid chain: Voltage-gated potassium channel subunit beta-3 (404 aa).

Over residues 1 to 14 (MQVSIACTEQNLRS) the composition is skewed to polar residues. Positions 1–78 (MQVSIACTEQ…RESTGRGTGM (78 aa)) are disordered. Residues 28–50 (PGGGNGGPVGGGHGNPPGGGGLG) are compositionally biased toward gly residues. NADP(+) contacts are provided by Thr97, Trp98, Gln104, and Asp126. Tyr131 (proton donor/acceptor) is an active-site residue. Positions 199, 229, 230, 255, 284, 285, 286, 287, 288, 289, 295, 305, 364, 366, 370, and 373 each coordinate NADP(+).

It belongs to the shaker potassium channel beta subunit family. In terms of assembly, forms heteromultimeric complex with alpha subunits. Interacts with KCNA5 and KCNB2. As to expression, predominantly expressed in brain. Strongest expression in olfactory bulb and thalamic nuclei. Not detected in heart, spleen, lung, liver, skeletal muscle, kidney and testis.

The protein resides in the cytoplasm. Regulatory subunit of the voltage-gated potassium (Kv) channels composed of pore-forming and potassium-conducting alpha subunits and of regulatory beta subunits. The beta-3/KCNAB3 subunit may mediate closure of potassium channels. Inactivates Kv1.4/KCNA4 alpha subunit-containing Kv channel current but not Kv1.1/KCNA1 or Kv1.5/KCNA5 channels. May display nicotinamide adenine dinucleotide phosphate (NADPH)-dependent aldoketoreductase activity. The binding of oxidized and reduced NADP(H) cofactors may be required for the regulation of potassium channel activity. The chain is Voltage-gated potassium channel subunit beta-3 from Rattus norvegicus (Rat).